The primary structure comprises 748 residues: Acyl-coenzyme A oxidase (748 aa).

This sequence belongs to the acyl-CoA oxidase family. Requires FAD as cofactor.

It localises to the peroxisome. The enzyme catalyses a 2,3-saturated acyl-CoA + O2 = a (2E)-enoyl-CoA + H2O2. It participates in lipid metabolism; peroxisomal fatty acid beta-oxidation. This is Acyl-coenzyme A oxidase (POX1) from Candida glabrata (strain ATCC 2001 / BCRC 20586 / JCM 3761 / NBRC 0622 / NRRL Y-65 / CBS 138) (Yeast).